The primary structure comprises 488 residues: Phenylalanine--tRNA ligase alpha subunit (488 aa).

Residues threonine 332, glutamine 371–aspartate 373, and phenylalanine 410 each bind L-phenylalanine. Residue glutamate 412 coordinates Mg(2+). Phenylalanine 435 lines the L-phenylalanine pocket.

This sequence belongs to the class-II aminoacyl-tRNA synthetase family. Phe-tRNA synthetase alpha subunit type 2 subfamily. As to quaternary structure, tetramer of two alpha and two beta subunits. Requires Mg(2+) as cofactor.

The protein localises to the cytoplasm. It carries out the reaction tRNA(Phe) + L-phenylalanine + ATP = L-phenylalanyl-tRNA(Phe) + AMP + diphosphate + H(+). This Aeropyrum pernix (strain ATCC 700893 / DSM 11879 / JCM 9820 / NBRC 100138 / K1) protein is Phenylalanine--tRNA ligase alpha subunit.